Consider the following 172-residue polypeptide: Translation initiation factor IF-3 (172 aa).

This sequence belongs to the IF-3 family. Monomer.

Its subcellular location is the cytoplasm. In terms of biological role, IF-3 binds to the 30S ribosomal subunit and shifts the equilibrium between 70S ribosomes and their 50S and 30S subunits in favor of the free subunits, thus enhancing the availability of 30S subunits on which protein synthesis initiation begins. The protein is Translation initiation factor IF-3 of Haemophilus influenzae (strain ATCC 51907 / DSM 11121 / KW20 / Rd).